A 124-amino-acid polypeptide reads, in one-letter code: Small ribosomal subunit protein bS6 (124 aa).

Belongs to the bacterial ribosomal protein bS6 family.

In terms of biological role, binds together with bS18 to 16S ribosomal RNA. This is Small ribosomal subunit protein bS6 from Chromobacterium violaceum (strain ATCC 12472 / DSM 30191 / JCM 1249 / CCUG 213 / NBRC 12614 / NCIMB 9131 / NCTC 9757 / MK).